The following is a 950-amino-acid chain: Serine/threonine-protein phosphatase 4 regulatory subunit 1 (950 aa).

HEAT repeat units lie at residues methionine 1–serine 25, glutamate 26–arginine 63, methionine 65–glutamate 81, arginine 82–glutamate 119, alanine 127–isoleucine 164, aspartate 168–lysine 206, isoleucine 208–glutamine 246, alanine 248–glutamine 285, and isoleucine 287–asparagine 324. 3 disordered regions span residues serine 326–asparagine 374, glutamate 413–valine 438, and glutamate 473–isoleucine 499. Over residues phenylalanine 332 to aspartate 365 the composition is skewed to basic and acidic residues. HEAT repeat units follow at residues lysine 505 to histidine 542, isoleucine 568 to aspartate 606, leucine 698 to isoleucine 734, tryptophan 799 to lysine 837, and glutamine 861 to tyrosine 898. Serine 935 bears the Phosphoserine mark.

Serine/threonine-protein phosphatase 4 (PP4) occurs in different assemblies of the catalytic and one or more regulatory subunits. Component of the PP4 complex PPP4C-PPP4R1. Interacts with HDAC3. In terms of assembly, (Microbial infection) Interacts with merkel polyomavirus small tumor antigen; this interaction bridges small tumor antigen with NEMO to inhibit NF-kappa-B. Widely expressed with high expression in cultured mesangial cells. Isoform 1 and isoform 2 are expressed in renal tissues.

Its function is as follows. Regulatory subunit of serine/threonine-protein phosphatase 4. May play a role in regulation of cell division in renal glomeruli. The PPP4C-PPP4R1 PP4 complex may play a role in dephosphorylation and regulation of HDAC3. Plays a role in the inhibition of TNF-induced NF-kappa-B activation by regulating the dephosphorylation of TRAF2. (Microbial infection) Participates in merkel polyomavirus-mediated inhibition of NF-kappa-B by bridging viral small tumor antigen with NEMO. This is Serine/threonine-protein phosphatase 4 regulatory subunit 1 (PPP4R1) from Homo sapiens (Human).